A 1783-amino-acid chain; its full sequence is uncharacterized protein (1783 aa).

Residues 16–36 (FFLLFGIIFVLFSIIFLETSI) traverse the membrane as a helical segment. A compositionally biased stretch (low complexity) spans 105–119 (GSDSGQSNGSGDNQN). The interval 105 to 125 (GSDSGQSNGSGDNQNKTIPRK) is disordered. Helical transmembrane passes span 917 to 937 (VSTVIAIFLIILALYLIILLI), 967 to 987 (VFAGIVAIVSSFLGVLFAFLL), 1010 to 1030 (WLSFFGSFFITFFVFEFISWI), 1084 to 1104 (LFTYVGLSSVALLLIGIAGTI), 1660 to 1680 (FLLGTIIPFIFITCVVLGISM), 1709 to 1729 (FIPAFVLALLISIGVLAGVLI), 1730 to 1750 (GIQAVVFNVAQVFLTNVFEFL), and 1752 to 1772 (YMVGIVLFGVTIFVIGSYFWI).

This sequence belongs to the ABC-4 integral membrane protein family.

Its subcellular location is the cell membrane. This is an uncharacterized protein from Mycoplasma genitalium (strain ATCC 33530 / DSM 19775 / NCTC 10195 / G37) (Mycoplasmoides genitalium).